The primary structure comprises 186 residues: Ribosome-recycling factor (186 aa).

It belongs to the RRF family.

The protein resides in the cytoplasm. In terms of biological role, responsible for the release of ribosomes from messenger RNA at the termination of protein biosynthesis. May increase the efficiency of translation by recycling ribosomes from one round of translation to another. This Burkholderia lata (strain ATCC 17760 / DSM 23089 / LMG 22485 / NCIMB 9086 / R18194 / 383) protein is Ribosome-recycling factor.